Consider the following 418-residue polypeptide: Nisin biosynthesis protein NisC (418 aa).

This sequence to B.subtilis SpaC and S.epidermidis EpiC.

Could be implicated in the processing or the export process of the nisin lantibiotic. The protein is Nisin biosynthesis protein NisC (nisC) of Lactococcus lactis subsp. lactis (Streptococcus lactis).